Here is a 695-residue protein sequence, read N- to C-terminus: Ubiquitin carboxyl-terminal hydrolase 20 (695 aa).

Disordered regions lie at residues 1 to 20 and 42 to 162; these read MLMA…SSIL and SLAL…SLFY. Low complexity-rich tracts occupy residues 9–20 and 61–86; these read PSSILPRSSSIL and NHDS…SQSV. Residues 112-124 show a composition bias toward acidic residues; the sequence is DDIDDDIWGDDDL. In terms of domain architecture, USP spans 176-476; that stretch reads AGLWNLGNSC…DSYILFYARE (301 aa). The Nucleophile role is filled by Cys-185. The active-site Proton acceptor is the His-435. Low complexity predominate over residues 556-571; that stretch reads SAESSSGEESPMGELL. 2 disordered regions span residues 556-585 and 674-695; these read SAES…PCTE and AREL…LKTT.

Belongs to the peptidase C19 family.

It catalyses the reaction Thiol-dependent hydrolysis of ester, thioester, amide, peptide and isopeptide bonds formed by the C-terminal Gly of ubiquitin (a 76-residue protein attached to proteins as an intracellular targeting signal).. Its function is as follows. Recognizes and hydrolyzes the peptide bond at the C-terminal Gly of ubiquitin. Involved in the processing of poly-ubiquitin precursors as well as that of ubiquitinated proteins. In Arabidopsis thaliana (Mouse-ear cress), this protein is Ubiquitin carboxyl-terminal hydrolase 20 (UBP20).